The chain runs to 64 residues: Conotoxin VnMLCL-05 (64 aa).

The N-terminal stretch at M1 to P19 is a signal peptide. A propeptide spanning residues N20–D43 is cleaved from the precursor. A Lysine amide modification is found at K63.

The protein belongs to the conotoxin T superfamily. In terms of tissue distribution, expressed by the venom duct.

The protein resides in the secreted. The protein is Conotoxin VnMLCL-05 of Conus ventricosus (Mediterranean cone).